Reading from the N-terminus, the 254-residue chain is uncharacterized protein (254 aa).

This is an uncharacterized protein from Escherichia coli (strain K12).